The chain runs to 485 residues: Glutamyl-tRNA(Gln) amidotransferase subunit A (485 aa).

Residues lysine 78 and serine 153 each act as charge relay system in the active site. Serine 177 functions as the Acyl-ester intermediate in the catalytic mechanism.

The protein belongs to the amidase family. GatA subfamily. As to quaternary structure, heterotrimer of A, B and C subunits.

It carries out the reaction L-glutamyl-tRNA(Gln) + L-glutamine + ATP + H2O = L-glutaminyl-tRNA(Gln) + L-glutamate + ADP + phosphate + H(+). Functionally, allows the formation of correctly charged Gln-tRNA(Gln) through the transamidation of misacylated Glu-tRNA(Gln) in organisms which lack glutaminyl-tRNA synthetase. The reaction takes place in the presence of glutamine and ATP through an activated gamma-phospho-Glu-tRNA(Gln). This is Glutamyl-tRNA(Gln) amidotransferase subunit A from Bacillus cereus (strain 03BB102).